The sequence spans 589 residues: Probable methyltransferase PMT23 (589 aa).

Over 1-4 (MAIS) the chain is Cytoplasmic. The chain crosses the membrane as a helical; Signal-anchor for type II membrane protein span at residues 5–25 (VQHVVVLLLSTLLIAITFFLF). Over 26–589 (TSDNARFPFP…FWRPAKPELR (564 aa)) the chain is Lumenal. Residues Asn-70, Asn-375, and Asn-442 are each glycosylated (N-linked (GlcNAc...) asparagine).

Belongs to the methyltransferase superfamily.

Its subcellular location is the golgi apparatus membrane. The polypeptide is Probable methyltransferase PMT23 (Arabidopsis thaliana (Mouse-ear cress)).